The following is a 301-amino-acid chain: Fluoroquinolones export ATP-binding protein MT2762 (301 aa).

The region spanning 18-246 is the ABC transporter domain; sequence IRVRGLTFRY…RSRRRVRVEY (229 aa). 52–59 contacts ATP; sequence GPSGAGKS.

The protein belongs to the ABC transporter superfamily. In terms of assembly, the complex is composed of 2 ATP-binding proteins and 2 transmembrane proteins.

It is found in the cell membrane. Part of the ABC transporter complex involved in fluoroquinolones export. Probably responsible for energy coupling to the transport system. This chain is Fluoroquinolones export ATP-binding protein MT2762, found in Mycobacterium tuberculosis (strain CDC 1551 / Oshkosh).